A 219-amino-acid chain; its full sequence is 2-C-methyl-D-erythritol 4-phosphate cytidylyltransferase (219 aa).

This sequence belongs to the IspD/TarI cytidylyltransferase family. IspD subfamily.

The enzyme catalyses 2-C-methyl-D-erythritol 4-phosphate + CTP + H(+) = 4-CDP-2-C-methyl-D-erythritol + diphosphate. It participates in isoprenoid biosynthesis; isopentenyl diphosphate biosynthesis via DXP pathway; isopentenyl diphosphate from 1-deoxy-D-xylulose 5-phosphate: step 2/6. Functionally, catalyzes the formation of 4-diphosphocytidyl-2-C-methyl-D-erythritol from CTP and 2-C-methyl-D-erythritol 4-phosphate (MEP). The polypeptide is 2-C-methyl-D-erythritol 4-phosphate cytidylyltransferase (Chlamydia trachomatis serovar D (strain ATCC VR-885 / DSM 19411 / UW-3/Cx)).